The sequence spans 252 residues: Centriole, cilia and spindle-associated protein (252 aa).

At Met-1 the chain carries N-acetylmethionine. An ST]-E-Y-X(3)-Y motif 1; required for efficient microtubule binding and stabilization motif is present at residues 9-15; the sequence is SEYMKRY. A disordered region spans residues 49 to 163; the sequence is WDAWGPDSPS…RSTSKIKENK (115 aa). Low complexity predominate over residues 54–64; it reads PDSPSDSSASP. Position 65 is a phosphoserine (Ser-65). The segment covering 108-125 has biased composition (basic and acidic residues); it reads PKKDTEEKPEEHKTKETD. Ser-191 carries the post-translational modification Phosphoserine. An ST]-E-Y-X(3)-Y motif 2; required for efficient microtubule binding and stabilization motif is present at residues 242 to 248; that stretch reads TEYMRCY.

Belongs to the CCSAP family. Associates with microtubules; the association occurs on polyglutamylated tubulin.

The protein localises to the cytoplasm. The protein resides in the cytoskeleton. It is found in the microtubule organizing center. It localises to the centrosome. Its subcellular location is the centriole. The protein localises to the spindle. The protein resides in the cilium basal body. It is found in the cilium axoneme. It localises to the cell projection. Its subcellular location is the axon. The protein localises to the cilium. Its function is as follows. Plays a role in microtubule (MT) stabilization and this stabilization involves the maintenance of NUMA1 at the spindle poles. Colocalizes with polyglutamylated MTs to promote MT stabilization and regulate bipolar spindle formation in mitosis. Binding of CCSAP to centrosomes and the spindle around centrosomes during mitosis inhibits MT depolymerization, thereby stabilizing the mitotic spindle. May play a role in embryonic development. May be required for proper cilia beating. This Mus musculus (Mouse) protein is Centriole, cilia and spindle-associated protein (Ccsap).